We begin with the raw amino-acid sequence, 648 residues long: RAF proto-oncogene serine/threonine-protein kinase (648 aa).

Ser-29 is modified (phosphoserine; by MAPK1). Ser-43 bears the Phosphoserine; by PKA and MAPK1 mark. One can recognise an RBD domain in the interval Asn-56–Leu-131. Residues Thr-138 to Cys-184 form a Phorbol-ester/DAG-type zinc finger. His-139, Cys-152, Cys-155, Cys-165, Cys-168, His-173, Cys-176, and Cys-184 together coordinate Zn(2+). The disordered stretch occupies residues Ser-220–Gly-334. A compositionally biased stretch (polar residues) spans Thr-239 to Pro-271. The residue at position 252 (Ser-252) is a Phosphoserine. Ser-259 bears the Phosphoserine; by PKA, PKC and PKB/AKT1 mark. At Thr-268 the chain carries Phosphothreonine; by autocatalysis. Phosphothreonine; by PKA is present on Thr-269. Over residues Arg-275–Ser-285 the composition is skewed to basic and acidic residues. Residues Glu-286–Ser-301 show a composition bias toward low complexity. Ser-289 bears the Phosphoserine; by MAPK1 mark. Ser-296 carries the phosphoserine modification. Ser-301 carries the phosphoserine; by MAPK1 modification. Positions Arg-331–Val-349 are interaction with PEBP1/RKIP. Ser-338 carries the post-translational modification Phosphoserine; by PAK1, PAK2, PAK3 and PAK5. A Phosphoserine; by PAK1, PAK2 and PAK3 modification is found at Ser-339. Phosphotyrosine; by SRC is present on residues Tyr-340 and Tyr-341. Residues Val-349–Leu-609 enclose the Protein kinase domain. ATP-binding positions include Ile-355 to Val-363 and Lys-375. Asp-468 serves as the catalytic Proton acceptor. Phosphoserine is present on Ser-471. Thr-491 is subject to Phosphothreonine. Ser-494 is modified (phosphoserine). At Ser-499 the chain carries Phosphoserine; by PKC. Arg-563 is modified (symmetric dimethylarginine; by PRMT5). Ser-621 carries the post-translational modification Phosphoserine. Ser-642 is subject to Phosphoserine; by MAPK1.

Belongs to the protein kinase superfamily. TKL Ser/Thr protein kinase family. RAF subfamily. In terms of assembly, monomer. Homodimer. Heterodimerizes with BRAF and this heterodimer possesses a highly increased kinase activity compared to the respective homodimers or monomers. Heterodimerization is mitogen-regulated and enhanced by 14-3-3 proteins. MAPK1/ERK2 activation can induce a negative feedback that promotes the dissociation of the heterodimer. Forms a multiprotein complex with Ras (M-Ras/MRAS), SHOC2 and protein phosphatase 1 (PPP1CA, PPP1CB and PPP1CC). Interacts with LZTR1. Interacts with Ras proteins; the interaction is antagonized by RIN1. Weakly interacts with RIT1. Interacts (via N-terminus) with RGS14 (via RBD domains); the interaction mediates the formation of a ternary complex with BRAF, a ternary complex inhibited by GNAI1. Probably forms a complex composed of chaperones HSP90 and HSP70, co-chaperones CDC37, PPP5C, TSC1 and client protein TSC2, CDK4, AKT, RAF1 and NR3C1; this complex does not contain co-chaperones STIP1/HOP and PTGES3/p23. Interacts with STK3/MST2; the interaction inhibits its pro-apoptotic activity. Interacts (when phosphorylated at Ser-259) with YWHAZ (unphosphorylated at 'Thr-232'). Interacts with MAP2K1/MEK1 and MAP2K2/MEK2. Interacts with MAP3K5/ASF1 (via N-terminus) and this interaction inhibits the proapoptotic function of MAP3K5/ASK1. Interacts with PAK1 (via kinase domain). The phosphorylated form interacts with PIN1. The Ser-338 and Ser-339 phosphorylated form (by PAK1) interacts with BCL2. Interacts with PEBP1/RKIP and this interaction is enhanced if RAF1 is phosphorylated on residues Ser-338, Ser-339, Tyr-340 and Tyr-341. Interacts with ADCY2, ADCY5, ADCY6, DGKH, RCAN1/DSCR1, PPP1R12A, PKB/AKT1, PPP2CA, PPP2R1B, SPRY2, SPRY4, CNKSR1/CNK1, KSR2 and PHB/prohibitin. Interacts with ROCK2. In its active form, interacts with PRMT5. Interacts with FAM83B; displaces 14-3-3 proteins from RAF1 and activates RAF1. Interacts with PDE8A; the interaction promotes RAF1 activity. Interacts with MFHAS1. Interacts with GLS. Interacts with NEK10 and MAP2K1; the interaction is direct with NEK10 and required for ERK1/2-signaling pathway activation in response to UV irradiation. Requires Zn(2+) as cofactor. In terms of processing, phosphorylation at Thr-269, Ser-338, Tyr-341, Thr-491 and Ser-494 results in its activation. Phosphorylation at Ser-29, Ser-43, Ser-289, Ser-296, Ser-301 and Ser-642 by MAPK1/ERK2 results in its inactivation. Phosphorylation at Ser-259 induces the interaction with YWHAZ and inactivates kinase activity. Dephosphorylation of Ser-259 by the SHOC2-MRAS-PP1c (SMP) complex consisting of SHOC2, GTP-bound M-Ras/MRAS and the catalytic subunit of protein phosphatase 1 (PPP1CA, PPP1CB or PPP1CC); this relieves inactivation and stimulates kinase activity. Phosphorylation at Ser-338 by PAK1 and PAK5 and Ser-339 by PAK1 is required for its mitochondrial localization. Phosphorylation at Ser-621 in response to growth factor treatment stabilizes the protein, possibly by preventing proteasomal degradation. Phosphorylation at Ser-289, Ser-296, Ser-301, Ser-338 and Ser-621 are somehow linked to the methylation potential of cells. Treatment of cells with HGF in the presence of the methylation inhibitor 5'-methylthioadenosine (MTA) results in increased phosphorylation at Ser-338 and Ser-621 and decreased phosphorylation at Ser-296, Ser-301 and Ser-338. Dephosphorylation at Ser-338 by PPP5C results in an activity decrease. Methylated at Arg-563 in response to EGF treatment. This modification leads to destabilization of the protein, possibly through proteasomal degradation. As to expression, in skeletal muscle, isoform 1 is more abundant than isoform 2.

It is found in the cytoplasm. It localises to the cell membrane. The protein resides in the mitochondrion. The protein localises to the nucleus. It carries out the reaction L-seryl-[protein] + ATP = O-phospho-L-seryl-[protein] + ADP + H(+). It catalyses the reaction L-threonyl-[protein] + ATP = O-phospho-L-threonyl-[protein] + ADP + H(+). Its activity is regulated as follows. Regulation is a highly complex process involving membrane recruitment, protein-protein interactions, dimerization, and phosphorylation/dephosphorylation events. Ras-GTP recruits RAF1 to the membrane, thereby promoting its activation. The inactive conformation of RAF1 is maintained by autoinhibitory interactions occurring between the N-terminal regulatory and the C-terminal catalytic domains and by the binding of a 14-3-3 protein that contacts two phosphorylation sites, Ser-259 and Ser-621. Upon mitogenic stimulation, Ras and PPP2R1A cooperate to release autoinhibition and the subsequent phosphorylation of activating sites: Ser-338, Tyr-341, Thr-491, and Ser-494, yields a fully active kinase. Through a negative feedback mechanism involving MAPK1/ERK2, RAF1 is phosphorylated on Ser-29, Ser-43, Ser-289, Ser-296, Ser-301 and Ser-642 by MAPK1/ERK2, which yields an inactive, desensitized kinase. The signaling-competent conformation of RAF1 is finally re-established by the coordinated action of PIN1, a prolyl isomerase that converts pSer and pThr residues from the cis to the trans conformation, which is preferentially recognized and dephosphorylated by PPP2R1A. Activated by homodimerization and heterodimerization (with BRAF). Also regulated through association with other proteins such as KSR2, CNKSR1/CNK1, PEBP1/RKIP, PHB/prohibitin and SPRY4. PEBP1/RKIP acts by dissociating RAF1 from its substrates MAP2K1/MEK1 and MAP2K2/MEK2. PHB/prohibitin facilitates the displacement of 14-3-3 from RAF1 by activated Ras, thereby promoting cell membrane localization and phosphorylation of RAF1 at the activating Ser-338. SPRY4 inhibits Ras-independent, but not Ras-dependent, activation of RAF1. CNKSR1/CNK1 regulates Src-mediated RAF1 activation. Its function is as follows. Serine/threonine-protein kinase that acts as a regulatory link between the membrane-associated Ras GTPases and the MAPK/ERK cascade, and this critical regulatory link functions as a switch determining cell fate decisions including proliferation, differentiation, apoptosis, survival and oncogenic transformation. RAF1 activation initiates a mitogen-activated protein kinase (MAPK) cascade that comprises a sequential phosphorylation of the dual-specific MAPK kinases (MAP2K1/MEK1 and MAP2K2/MEK2) and the extracellular signal-regulated kinases (MAPK3/ERK1 and MAPK1/ERK2). The phosphorylated form of RAF1 (on residues Ser-338 and Ser-339, by PAK1) phosphorylates BAD/Bcl2-antagonist of cell death at 'Ser-75'. Phosphorylates adenylyl cyclases: ADCY2, ADCY5 and ADCY6, resulting in their activation. Phosphorylates PPP1R12A resulting in inhibition of the phosphatase activity. Phosphorylates TNNT2/cardiac muscle troponin T. Can promote NF-kB activation and inhibit signal transducers involved in motility (ROCK2), apoptosis (MAP3K5/ASK1 and STK3/MST2), proliferation and angiogenesis (RB1). Can protect cells from apoptosis also by translocating to the mitochondria where it binds BCL2 and displaces BAD/Bcl2-antagonist of cell death. Regulates Rho signaling and migration, and is required for normal wound healing. Plays a role in the oncogenic transformation of epithelial cells via repression of the TJ protein, occludin (OCLN) by inducing the up-regulation of a transcriptional repressor SNAI2/SLUG, which induces down-regulation of OCLN. Restricts caspase activation in response to selected stimuli, notably Fas stimulation, pathogen-mediated macrophage apoptosis, and erythroid differentiation. This Homo sapiens (Human) protein is RAF proto-oncogene serine/threonine-protein kinase.